A 512-amino-acid polypeptide reads, in one-letter code: Kelch repeat protein C2 (512 aa).

In terms of domain architecture, BTB spans 2-67 (ESVIFSINGE…IRWKKINITI (66 aa)). Kelch repeat units lie at residues 216–261 (IKHN…LHNC), 262–307 (LYII…VNNG), 309–354 (LYVI…FVND), 356–403 (IYVM…EYDG), 405–449 (IYVI…SCGD), and 452–498 (LIIA…THKS).

The protein belongs to the poxviruses Kelch family.

In Homo sapiens (Human), this protein is Kelch repeat protein C2.